Here is a 349-residue protein sequence, read N- to C-terminus: Protein RecA (349 aa).

Position 64-71 (64-71 (GPESSGKT)) interacts with ATP. The disordered stretch occupies residues 328–349 (NGEIEVEAPSEEEFEDLPLDLK). The span at 331–349 (IEVEAPSEEEFEDLPLDLK) shows a compositional bias: acidic residues.

Belongs to the RecA family.

It is found in the cytoplasm. Functionally, can catalyze the hydrolysis of ATP in the presence of single-stranded DNA, the ATP-dependent uptake of single-stranded DNA by duplex DNA, and the ATP-dependent hybridization of homologous single-stranded DNAs. It interacts with LexA causing its activation and leading to its autocatalytic cleavage. The sequence is that of Protein RecA from Halalkalibacterium halodurans (strain ATCC BAA-125 / DSM 18197 / FERM 7344 / JCM 9153 / C-125) (Bacillus halodurans).